A 351-amino-acid polypeptide reads, in one-letter code: Modulator of apoptosis 1 (351 aa).

The short motif at 49–52 (YRLL) is the LIR element. Residues 120–127 (LTRALAHE) form a BH3-like region. Residues 202–205 (KRRR) are RASSF1-binding.

The protein belongs to the PNMA family. Homodimer. Under normal circumstances, held in an inactive conformation by an intramolecular interaction. Interacts with BAX. Binding to RASSF1 isoform A (RASSF1A) relieves this inhibitory interaction and allows further binding to BAX. Also binds to BCL2 and BCLX. Recruited to the TNFRSF1A and TNFRSF10A complexes in response to their respective cognate ligand, after internalization. Interacts with TRIM39. Interacts with RASSF6. Interacts with ATG8 proteins MAP1LC3A, MAP1LC3B and MAP1LC3C. Does not interact with ATG8 proteins GABARAPL1, GABARAPL2 and GABARAP. Interacts with SQSTM1; promoting dissociation of SQSTM1 inclusion bodies that sequester KEAP1. In terms of processing, ubiquitinated and degraded during mitotic exit by APC/C-Cdh1, this modification is inhibited by TRIM39.

The protein localises to the cytoplasm. It localises to the cytosol. The protein resides in the mitochondrion outer membrane. It is found in the extracellular vesicle membrane. Functionally, retrotransposon-derived protein that forms virion-like capsids. Acts as an effector of BAX during apoptosis: enriched at outer mitochondria membrane and associates with BAX upon induction of apoptosis, facilitating BAX-dependent mitochondrial outer membrane permeabilization and apoptosis. Required for death receptor-dependent apoptosis. When associated with RASSF1, promotes BAX conformational change and translocation to mitochondrial membranes in response to TNF and TNFSF10 stimulation. Also promotes autophagy: promotes phagophore closure via association with ATG8 proteins. Acts as an inhibitor of the NFE2L2/NRF2 pathway via interaction with SQSTM1: interaction promotes dissociation of SQSTM1 inclusion bodies that sequester KEAP1, relieving inactivation of the BCR(KEAP1) complex. The chain is Modulator of apoptosis 1 from Macaca fascicularis (Crab-eating macaque).